The sequence spans 376 residues: Chaperone protein DnaJ (376 aa).

Positions D5–G70 constitute a J domain. A CR-type zinc finger spans residues G133–N215. Residues C146, C149, C163, C166, C189, C192, C203, and C206 each contribute to the Zn(2+) site. CXXCXGXG motif repeat units lie at residues C146–G153, C163–G170, C189–G196, and C203–G210.

It belongs to the DnaJ family. Homodimer. The cofactor is Zn(2+).

It is found in the cytoplasm. Participates actively in the response to hyperosmotic and heat shock by preventing the aggregation of stress-denatured proteins and by disaggregating proteins, also in an autonomous, DnaK-independent fashion. Unfolded proteins bind initially to DnaJ; upon interaction with the DnaJ-bound protein, DnaK hydrolyzes its bound ATP, resulting in the formation of a stable complex. GrpE releases ADP from DnaK; ATP binding to DnaK triggers the release of the substrate protein, thus completing the reaction cycle. Several rounds of ATP-dependent interactions between DnaJ, DnaK and GrpE are required for fully efficient folding. Also involved, together with DnaK and GrpE, in the DNA replication of plasmids through activation of initiation proteins. The sequence is that of Chaperone protein DnaJ from Clostridium novyi (strain NT).